We begin with the raw amino-acid sequence, 353 residues long: Fe(3+) ions import ATP-binding protein FbpC (353 aa).

The 231-residue stretch at 9 to 239 folds into the ABC transporter domain; the sequence is VVFENVRKTF…PASSFIADFM (231 aa). Residue 41-48 coordinates ATP; the sequence is GPSGCGKT.

This sequence belongs to the ABC transporter superfamily. Fe(3+) ion importer (TC 3.A.1.10) family. As to quaternary structure, the complex is composed of two ATP-binding proteins (FbpC), two transmembrane proteins (FbpB) and a solute-binding protein (FbpA).

It localises to the cell inner membrane. It carries out the reaction Fe(3+)(out) + ATP + H2O = Fe(3+)(in) + ADP + phosphate + H(+). Part of the ABC transporter complex FbpABC involved in Fe(3+) ions import. Responsible for energy coupling to the transport system. This chain is Fe(3+) ions import ATP-binding protein FbpC, found in Agrobacterium fabrum (strain C58 / ATCC 33970) (Agrobacterium tumefaciens (strain C58)).